Consider the following 468-residue polypeptide: 6-phospho-beta-galactosidase (468 aa).

D-galactose 6-phosphate-binding residues include Gln19, His116, Asn159, Glu160, and Asn297. Glu160 serves as the catalytic Proton donor. Glu375 (nucleophile) is an active-site residue. D-galactose 6-phosphate-binding residues include Ser428, Trp429, Lys435, and Tyr437.

The protein belongs to the glycosyl hydrolase 1 family.

The catalysed reaction is a 6-phospho-beta-D-galactoside + H2O = D-galactose 6-phosphate + an alcohol. It functions in the pathway carbohydrate metabolism; lactose degradation; D-galactose 6-phosphate and beta-D-glucose from lactose 6-phosphate: step 1/1. In Streptococcus pyogenes serotype M4 (strain MGAS10750), this protein is 6-phospho-beta-galactosidase.